The chain runs to 231 residues: Dephospho-CoA kinase domain-containing protein (231 aa).

The region spanning 3–207 (LVGLTGGIAS…RSMEYLPLRL (205 aa)) is the DPCK domain. Residue 8-15 (GGIASGKS) coordinates ATP.

The protein belongs to the CoaE family.

The chain is Dephospho-CoA kinase domain-containing protein (Dcakd) from Mus musculus (Mouse).